The following is a 510-amino-acid chain: MANCENNPWKKNAWGKNEETAEEPIVSFADVLSEEFIEDLSVQEKLEEERYMKQLDQMFGDTSVSDDQLPINTEGMTDEEVALALQRHFDREADVARAVGSSSSVHFTPDRYHPKTMQETDSENEDDDALRQAATDMLYAKLDEENATNSRLRPEGPSTSRTKHDTGVSGRRNADKTFNDRNTLPTGDMVGDKLNNKVFNKLMAFGKSESKRQMRNKDKEEKATMDTSVDSDTRLLLLKWINQGVFDSVDGIIATGKESAVLHAAQDSATSYAIKVYKTTLSEFKNRSEYVKDDFRFKNPRGVLKIWAEREFMNLSRMAKHGLPCPQPVKVRRNVLVMSFLGDQGLAAPRLKNVEWEFFTDDERRNVYDQVQSIMCRMYKECLLVHADLSEFNLLLTPDNKVHVIDVSQAMDLSHPRSLQFLTRDIQNIITFFTRIGTPNLPTYVQLFNLITDLDMVEDHDLLVQVEQFSEENRSVDLRHDKSRPADMELKKYNEEKKANRGISPAREYN.

Disordered stretches follow at residues 100–126 (GSSS…ENED) and 143–191 (DEEN…DMVG). Basic and acidic residues-rich tracts occupy residues 108-118 (TPDRYHPKTMQ) and 162-179 (TKHD…KTFN). The 276-residue stretch at 235 to 510 (LLLLKWINQG…RGISPAREYN (276 aa)) folds into the Protein kinase domain. ATP-binding positions include 241 to 249 (INQGVFDSV) and lysine 275. Aspartate 388 acts as the Proton acceptor in catalysis. Residues 474–499 (RSVDLRHDKSRPADMELKKYNEEKKA) show a composition bias toward basic and acidic residues. Residues 474 to 510 (RSVDLRHDKSRPADMELKKYNEEKKANRGISPAREYN) are disordered.

It belongs to the protein kinase superfamily. RIO-type Ser/Thr kinase family. It depends on Mg(2+) as a cofactor. In terms of tissue distribution, expressed in tail neurons (PVQ and PHAL/PQR).

It catalyses the reaction L-seryl-[protein] + ATP = O-phospho-L-seryl-[protein] + ADP + H(+). It carries out the reaction L-threonyl-[protein] + ATP = O-phospho-L-threonyl-[protein] + ADP + H(+). In Caenorhabditis elegans, this protein is Serine/threonine-protein kinase RIO3 (riok-3).